A 190-amino-acid polypeptide reads, in one-letter code: Protein LIGHT-DEPENDENT SHORT HYPOCOTYLS 1 (190 aa).

Positions 1–26 (MDLISHQPNKNPNSSTQLTPPSSSRY) are enriched in polar residues. 2 disordered regions span residues 1–28 (MDLI…RYEN) and 145–190 (GVSY…GATV). One can recognise an ALOG domain in the interval 25 to 152 (RYENQKRRDW…ARGVSYEKKR (128 aa)). The short motif at 150–154 (KKRKR) is the Nuclear localization signal element. Positions 158 to 179 (QKPQTQPPLQLQQQQQQPQQGQ) are enriched in low complexity. Over residues 180 to 190 (SMMANYSGATV) the composition is skewed to polar residues.

The protein belongs to the plant homeotic and developmental regulators ALOG protein family. Expressed in hypocotyls, shoot apices and lateral root primordia and, weakly, in vascular tissues.

It localises to the nucleus. Functionally, probable transcription regulator that acts as a developmental regulator by promoting cell growth in response to continuous red (cR), far-red (cFR) and blue (cB) light in a phytochrome-dependent manner, at least during seedling development. The protein is Protein LIGHT-DEPENDENT SHORT HYPOCOTYLS 1 (LSH1) of Arabidopsis thaliana (Mouse-ear cress).